Here is a 240-residue protein sequence, read N- to C-terminus: Phosphoribosylaminoimidazole-succinocarboxamide synthase (240 aa).

It belongs to the SAICAR synthetase family.

It catalyses the reaction 5-amino-1-(5-phospho-D-ribosyl)imidazole-4-carboxylate + L-aspartate + ATP = (2S)-2-[5-amino-1-(5-phospho-beta-D-ribosyl)imidazole-4-carboxamido]succinate + ADP + phosphate + 2 H(+). It participates in purine metabolism; IMP biosynthesis via de novo pathway; 5-amino-1-(5-phospho-D-ribosyl)imidazole-4-carboxamide from 5-amino-1-(5-phospho-D-ribosyl)imidazole-4-carboxylate: step 1/2. The sequence is that of Phosphoribosylaminoimidazole-succinocarboxamide synthase from Wolbachia pipientis subsp. Culex pipiens (strain wPip).